The sequence spans 118 residues: MNAKALYKKKALRDRRKLRIKSKLLGDALRPRVSVFRSNRYFYAQAIDDVKQSTITHIDGRKMGFKNTQEDAKKLGALFAEELKKAGIERAVYDRNGYLYHGVVAAFAESLRENGIAL.

It belongs to the universal ribosomal protein uL18 family. Part of the 50S ribosomal subunit; part of the 5S rRNA/L5/L18/L25 subcomplex. Contacts the 5S and 23S rRNAs.

In terms of biological role, this is one of the proteins that bind and probably mediate the attachment of the 5S RNA into the large ribosomal subunit, where it forms part of the central protuberance. This is Large ribosomal subunit protein uL18 from Helicobacter pylori (strain P12).